Consider the following 207-residue polypeptide: Casparian strip membrane protein 1 (207 aa).

A compositionally biased stretch (polar residues) spans 1–12; it reads MEADSTTINVTE. Residues 1–20 form a disordered region; the sequence is MEADSTTINVTETPKERKGK. The Cytoplasmic segment spans residues 1-48; the sequence is MEADSTTINVTETPKERKGKAPLLAAPPASSGVKRVLQKAPKGGYKRG. The helical transmembrane segment at 49-69 threads the bilayer; that stretch reads LAVFDVVLRLAGIATALGAAI. Over 70–98 the chain is Extracellular; it reads AMGSTDQTLPFFTQFFQFKAEFDDLPAFT. Residues 99–119 form a helical membrane-spanning segment; it reads FFVIANAITAAYLALTIPISI. The Cytoplasmic portion of the chain corresponds to 120–131; that stretch reads VCIIRPHLVAPR. The helical transmembrane segment at 132–152 threads the bilayer; that stretch reads VLLIFLDTVMVALTTAAAGGT. The Extracellular portion of the chain corresponds to 153–184; sequence ASIVYLAHNGNSDANWPAICQQFNDXCQKVSG. A helical membrane pass occupies residues 185 to 205; the sequence is AVVASFLTVVVLMLLIVLSAF. At 206 to 207 the chain is on the cytoplasmic side; sequence AL.

Belongs to the Casparian strip membrane proteins (CASP) family. As to quaternary structure, homodimer and heterodimers.

It is found in the cell membrane. Its function is as follows. Regulates membrane-cell wall junctions and localized cell wall deposition. Required for establishment of the Casparian strip membrane domain (CSD) and the subsequent formation of Casparian strips, a cell wall modification of the root endodermis that determines an apoplastic barrier between the intraorganismal apoplasm and the extraorganismal apoplasm and prevents lateral diffusion. The chain is Casparian strip membrane protein 1 from Cynara cardunculus var. scolymus (Globe artichoke).